We begin with the raw amino-acid sequence, 327 residues long: uncharacterized protein (327 aa).

An S4 RNA-binding domain is found at 12 to 84 (MRIDRYLTQQ…IPITILYEDD (73 aa)). Residue aspartate 137 is part of the active site.

It belongs to the pseudouridine synthase RluA family.

It carries out the reaction a uridine in RNA = a pseudouridine in RNA. This is an uncharacterized protein from Chlorobaculum parvum (strain DSM 263 / NCIMB 8327) (Chlorobium vibrioforme subsp. thiosulfatophilum).